Here is a 577-residue protein sequence, read N- to C-terminus: Cleavage stimulation factor subunit 2 (577 aa).

Ser14 bears the Phosphoserine mark. Positions 16 to 94 constitute an RRM domain; it reads RSVFVGNIPY…RALRVDNAAS (79 aa). Residues 108-248 form an interactions with CSTF3 and SYMPK region; the sequence is APVIESPYGE…VNGAPPLMQA (141 aa). Lys189 is covalently cross-linked (Glycyl lysine isopeptide (Lys-Gly) (interchain with G-Cter in SUMO2)). Residues 206-243 form a disordered region; it reads QPVHGAGPGSGSNVSMNQQNPQAPQAQSLGGMHVNGAP. Residues 222–232 show a composition bias toward low complexity; sequence NQQNPQAPQAQ. Arg308 is subject to Omega-N-methylarginine. Residues 340-409 form a disordered region; it reads EVEPRGYLGP…DGRGGRDPRG (70 aa). A compositionally biased stretch (basic and acidic residues) spans 360 to 373; sequence PGHESRGPPPHELR. The stretch at 410-414 is one 1; approximate repeat; it reads IDARG. A 12 X 5 AA tandem repeats of M-E-A-R-[AG] region spans residues 410–469; that stretch reads IDARGMEARAMEARGLDARGLEARAMEARAMEARAMEARAMEARAMEVRGMEARGMDTRG. 2 tandem repeats follow at residues 415–419 and 420–424. The stretch at 425-429 is one 4; approximate repeat; the sequence is LDARG. One copy of the 5; approximate repeat lies at 430 to 434; it reads LEARA. 4 tandem repeats follow at residues 435 to 439, 440 to 444, 445 to 449, and 450 to 454. The stretch at 455–459 is one 10; approximate repeat; sequence MEVRG. Residues 460–464 form repeat 11; sequence MEARG. The stretch at 465–469 is one 12; approximate repeat; sequence MDTRG. Residues Arg468 and Arg475 each carry the omega-N-methylarginine modification. The interval 508–532 is disordered; the sequence is GMQGASIQGGSQPGGFSPGQNQVTP. The segment at 514 to 577 is interaction with RPO2TC1; that stretch reads IQGGSQPGGF…EQIQKSTGAP (64 aa). Residues Ser518 and Ser524 each carry the phosphoserine modification.

In terms of assembly, the CSTF complex is composed of CSTF1 (50 kDa subunit), CSTF2 (64 kDa subunit) and CSTF3 (77 kDa subunit). CSTF2 directly interacts with CSTF3, SYMPK and RPO2TC1. Interacts with HSF1 in heat-stressed cells. Interacts with CPSF2, CPSF3 and FIP1L1. Interacts with DDX1.

The protein localises to the nucleus. One of the multiple factors required for polyadenylation and 3'-end cleavage of mammalian pre-mRNAs. This subunit is directly involved in the binding to pre-mRNAs. The sequence is that of Cleavage stimulation factor subunit 2 (CSTF2) from Homo sapiens (Human).